Here is a 249-residue protein sequence, read N- to C-terminus: Cell division protein FtsQ (249 aa).

The Cytoplasmic segment spans residues 1 to 6 (MKFILF). Residues 7-23 (ALLVSAGSWYGWKQLHS) traverse the membrane as a helical segment. Residues 24–249 (QDAVSKPIRY…YKNVMKERRI (226 aa)) lie on the Periplasmic side of the membrane. Positions 29–98 (KPIRYVKIEG…DAVHIKITEQ (70 aa)) constitute a POTRA domain.

This sequence belongs to the FtsQ/DivIB family. FtsQ subfamily. Part of a complex composed of FtsB, FtsL and FtsQ.

It localises to the cell inner membrane. Functionally, essential cell division protein. May link together the upstream cell division proteins, which are predominantly cytoplasmic, with the downstream cell division proteins, which are predominantly periplasmic. May control correct divisome assembly. The sequence is that of Cell division protein FtsQ from Methylomonas methanica (strain DSM 25384 / MC09).